A 678-amino-acid chain; its full sequence is Secretin ExeD (678 aa).

The signal sequence occupies residues 1 to 25 (MINKGKSWRLATVAAALMMAGSAWA). The N0 stretch occupies residues 26 to 122 (TEYSASFKNA…VVDETNPGIG (97 aa)). Positions 124–188 (EMVTRVVPVR…EVVRRVDKAG (65 aa)) are N1. Positions 189–264 (DQEVDIIKLR…MVRQLDRDLQ (76 aa)) are N2. The tract at residues 267 to 347 (GNTRVFYLKY…ELEQVVAKLD (81 aa)) is N3. The secretin stretch occupies residues 352-602 (QVLVEAIIVE…VFIRPTILRD (251 aa)). Positions 604 to 678 (HVYSGISSNK…GAQPFVQGNK (75 aa)) are s domain.

This sequence belongs to the bacterial secretin family. GSP D subfamily. In terms of assembly, forms a cylindrical channel with 15 subunits.

Its subcellular location is the cell outer membrane. Functionally, involved in a type II secretion system (T2SS, formerly general secretion pathway, GSP) for the export of proteins. This subunit forms the outer membrane channel. The protein is Secretin ExeD (exeD) of Aeromonas salmonicida.